Here is a 551-residue protein sequence, read N- to C-terminus: Membrane protein insertase YidC (551 aa).

The chain crosses the membrane as a helical span at residues 3–23 (ANHIRILLLVTIAIMFISLMG). Polar residues predominate over residues 33–47 (NTKQQTSATQNNSHY). The tract at residues 33-58 (NTKQQTSATQNNSHYDNADSSTNTDV) is disordered. 3 helical membrane-spanning segments follow: residues 361–381 (LVGN…LIFY), 431–451 (LSGC…YWVL), and 504–524 (VMMF…SGLV).

Belongs to the OXA1/ALB3/YidC family. Type 1 subfamily. In terms of assembly, interacts with the Sec translocase complex via SecD. Specifically interacts with transmembrane segments of nascent integral membrane proteins during membrane integration.

Its subcellular location is the cell inner membrane. Functionally, required for the insertion and/or proper folding and/or complex formation of integral membrane proteins into the membrane. Involved in integration of membrane proteins that insert both dependently and independently of the Sec translocase complex, as well as at least some lipoproteins. Aids folding of multispanning membrane proteins. The polypeptide is Membrane protein insertase YidC (Francisella tularensis subsp. novicida (strain U112)).